Here is a 237-residue protein sequence, read N- to C-terminus: Probable glutathione-independent glyoxalase SNO4 (237 aa).

Active-site residues include Cys138, His139, and Glu170.

It belongs to the peptidase C56 family. HSP31-like subfamily. Homodimer.

It localises to the cytoplasm. Its subcellular location is the P-body. The catalysed reaction is methylglyoxal + H2O = (R)-lactate + H(+). Catalyzes the conversion of methylglyoxal (MG) to D-lactate in a single glutathione (GSH)-independent step. May play a role in detoxifying endogenously produced glyoxals. Involved in protection against reactive oxygen species (ROS). Important for viability in stationary phase. May negatively regulate TORC1 in response to nutrient limitation. This chain is Probable glutathione-independent glyoxalase SNO4, found in Saccharomyces cerevisiae (strain ATCC 204508 / S288c) (Baker's yeast).